Consider the following 119-residue polypeptide: Fluoride-specific ion channel FluC 1 (119 aa).

The next 4 membrane-spanning stretches (helical) occupy residues 2-22 (TGAV…GAVL), 37-57 (AGTL…TFAA), 62-82 (TMLL…SFSV), and 99-119 (HALG…LLVA). 2 residues coordinate Na(+): Gly72 and Thr75.

This sequence belongs to the fluoride channel Fluc/FEX (TC 1.A.43) family.

Its subcellular location is the cell membrane. It catalyses the reaction fluoride(in) = fluoride(out). Its activity is regulated as follows. Na(+) is not transported, but it plays an essential structural role and its presence is essential for fluoride channel function. Its function is as follows. Fluoride-specific ion channel. Important for reducing fluoride concentration in the cell, thus reducing its toxicity. This is Fluoride-specific ion channel FluC 1 from Halobacterium salinarum (strain ATCC 700922 / JCM 11081 / NRC-1) (Halobacterium halobium).